Reading from the N-terminus, the 553-residue chain is Putative transport protein YidE (553 aa).

5 helical membrane passes run 4–24 (IALT…IGNV), 28–48 (GIGL…HFVS), 65–85 (FGLI…FFAS), 95–115 (LFAV…HKLF), and 158–178 (MSYA…MWML). 2 RCK C-terminal domains span residues 191–276 (QQHE…VIGQ) and 279–361 (DTSL…VLGN). The next 6 membrane-spanning stretches (helical) occupy residues 371 to 391 (MLPV…PVFV), 393 to 413 (GFPA…ALIL), 431 to 448 (NLAL…VVGL), 464 to 484 (LSWI…VGIL), 493 to 513 (YLTM…LAFA), and 533 to 553 (LVMF…WSIG).

The protein belongs to the AAE transporter (TC 2.A.81) family. YidE subfamily.

It is found in the cell membrane. The protein is Putative transport protein YidE of Shigella sonnei (strain Ss046).